Here is a 211-residue protein sequence, read N- to C-terminus: SOSS complex subunit B1 (211 aa).

A DNA-binding region (OB) is located at residues 22-92 (IVLETGRVTK…TLYTGRGGDL (71 aa)). A disordered region spans residues 110 to 211 (EPNPEYSAQQ…GKETRRSSKR (102 aa)). A compositionally biased stretch (polar residues) spans 115 to 128 (YSAQQAPNKTVQND). Composition is skewed to pro residues over residues 133-143 (APQPPTGPPAT) and 165-174 (PHPPHTPSHP).

Belongs to the SOSS-B family. SOSS-B1 subfamily. In terms of assembly, component of the SOSS complex, composed of SOSS-B (SOSS-B1/NABP2 or SOSS-B2/NABP1), SOSS-A/INTS3 and SOSS-C/INIP. SOSS complexes containing SOSS-B1/NABP2 are more abundant than complexes containing SOSS-B2/NABP1. Directly interacts with ATM, SOSS-A/INTS3 and RAD51. Interacts with INTS7. In terms of processing, phosphorylated by ATM in response to DNA damage. Phosphorylation prevents degradation by the proteasome, hence stabilization of the protein and accumulation within cells. Ubiquitinated in a FBXL5-dependent manner, leading to proteasomal degradation.

The protein localises to the nucleus. In terms of biological role, component of the SOSS complex, a multiprotein complex that functions downstream of the MRN complex to promote DNA repair and G2/M checkpoint. In the SOSS complex, acts as a sensor of single-stranded DNA that binds to single-stranded DNA, in particular to polypyrimidines. The SOSS complex associates with DNA lesions and influences diverse endpoints in the cellular DNA damage response including cell-cycle checkpoint activation, recombinational repair and maintenance of genomic stability. Required for efficient homologous recombination-dependent repair of double-strand breaks (DSBs) and ATM-dependent signaling pathways. The sequence is that of SOSS complex subunit B1 (NABP2) from Bos taurus (Bovine).